A 344-amino-acid polypeptide reads, in one-letter code: Glycerol-3-phosphate dehydrogenase [NAD(P)+] (344 aa).

Residues serine 23, tryptophan 24, arginine 44, and lysine 118 each coordinate NADPH. The sn-glycerol 3-phosphate site is built by lysine 118, glycine 147, and threonine 149. Residue alanine 151 coordinates NADPH. Residues lysine 202, aspartate 255, serine 265, arginine 266, and asparagine 267 each coordinate sn-glycerol 3-phosphate. The active-site Proton acceptor is the lysine 202. Arginine 266 contacts NADPH. Position 292 (glutamate 292) interacts with NADPH.

The protein belongs to the NAD-dependent glycerol-3-phosphate dehydrogenase family.

It is found in the cytoplasm. It catalyses the reaction sn-glycerol 3-phosphate + NAD(+) = dihydroxyacetone phosphate + NADH + H(+). The catalysed reaction is sn-glycerol 3-phosphate + NADP(+) = dihydroxyacetone phosphate + NADPH + H(+). It participates in membrane lipid metabolism; glycerophospholipid metabolism. In terms of biological role, catalyzes the reduction of the glycolytic intermediate dihydroxyacetone phosphate (DHAP) to sn-glycerol 3-phosphate (G3P), the key precursor for phospholipid synthesis. The chain is Glycerol-3-phosphate dehydrogenase [NAD(P)+] from Nitrosococcus oceani (strain ATCC 19707 / BCRC 17464 / JCM 30415 / NCIMB 11848 / C-107).